The chain runs to 275 residues: Bis(5'-nucleosyl)-tetraphosphatase, symmetrical (275 aa).

Belongs to the Ap4A hydrolase family.

It catalyses the reaction P(1),P(4)-bis(5'-adenosyl) tetraphosphate + H2O = 2 ADP + 2 H(+). In terms of biological role, hydrolyzes diadenosine 5',5'''-P1,P4-tetraphosphate to yield ADP. This chain is Bis(5'-nucleosyl)-tetraphosphatase, symmetrical, found in Photorhabdus laumondii subsp. laumondii (strain DSM 15139 / CIP 105565 / TT01) (Photorhabdus luminescens subsp. laumondii).